The following is a 70-amino-acid chain: Sec-independent protein translocase protein TatA (70 aa).

Residues 1 to 21 (MGSFSIWHWLIVLVVVALLFG) form a helical membrane-spanning segment. Positions 45 to 70 (KGESEQAEDETAKPLPKERDKDSARG) are disordered.

It belongs to the TatA/E family. In terms of assembly, the Tat system comprises two distinct complexes: a TatABC complex, containing multiple copies of TatA, TatB and TatC subunits, and a separate TatA complex, containing only TatA subunits. Substrates initially bind to the TatABC complex, which probably triggers association of the separate TatA complex to form the active translocon.

It localises to the cell inner membrane. Functionally, part of the twin-arginine translocation (Tat) system that transports large folded proteins containing a characteristic twin-arginine motif in their signal peptide across membranes. TatA could form the protein-conducting channel of the Tat system. This chain is Sec-independent protein translocase protein TatA, found in Phenylobacterium zucineum (strain HLK1).